The chain runs to 359 residues: Phosphoserine aminotransferase (359 aa).

Arg-41 is an L-glutamate binding site. Pyridoxal 5'-phosphate contacts are provided by residues 75–76 (AS), Trp-99, Thr-147, Asp-166, and Gln-189. Lys-190 carries the post-translational modification N6-(pyridoxal phosphate)lysine. 231–232 (NT) serves as a coordination point for pyridoxal 5'-phosphate.

The protein belongs to the class-V pyridoxal-phosphate-dependent aminotransferase family. SerC subfamily. As to quaternary structure, homodimer. It depends on pyridoxal 5'-phosphate as a cofactor.

The protein localises to the cytoplasm. It catalyses the reaction O-phospho-L-serine + 2-oxoglutarate = 3-phosphooxypyruvate + L-glutamate. The enzyme catalyses 4-(phosphooxy)-L-threonine + 2-oxoglutarate = (R)-3-hydroxy-2-oxo-4-phosphooxybutanoate + L-glutamate. It functions in the pathway amino-acid biosynthesis; L-serine biosynthesis; L-serine from 3-phospho-D-glycerate: step 2/3. The protein operates within cofactor biosynthesis; pyridoxine 5'-phosphate biosynthesis; pyridoxine 5'-phosphate from D-erythrose 4-phosphate: step 3/5. Functionally, catalyzes the reversible conversion of 3-phosphohydroxypyruvate to phosphoserine and of 3-hydroxy-2-oxo-4-phosphonooxybutanoate to phosphohydroxythreonine. The chain is Phosphoserine aminotransferase from Azobacteroides pseudotrichonymphae genomovar. CFP2.